The following is a 226-amino-acid chain: Leucyl/phenylalanyl-tRNA--protein transferase (226 aa).

It belongs to the L/F-transferase family.

The protein localises to the cytoplasm. It catalyses the reaction N-terminal L-lysyl-[protein] + L-leucyl-tRNA(Leu) = N-terminal L-leucyl-L-lysyl-[protein] + tRNA(Leu) + H(+). The enzyme catalyses N-terminal L-arginyl-[protein] + L-leucyl-tRNA(Leu) = N-terminal L-leucyl-L-arginyl-[protein] + tRNA(Leu) + H(+). It carries out the reaction L-phenylalanyl-tRNA(Phe) + an N-terminal L-alpha-aminoacyl-[protein] = an N-terminal L-phenylalanyl-L-alpha-aminoacyl-[protein] + tRNA(Phe). Its function is as follows. Functions in the N-end rule pathway of protein degradation where it conjugates Leu, Phe and, less efficiently, Met from aminoacyl-tRNAs to the N-termini of proteins containing an N-terminal arginine or lysine. The chain is Leucyl/phenylalanyl-tRNA--protein transferase from Pseudomonas aeruginosa (strain LESB58).